The primary structure comprises 589 residues: Monocopper oxidase-like protein SKS1 (589 aa).

A signal peptide spans 1–24 (MAATCSLLASFLLCFALLSAVSFA). Asparagine 62, asparagine 111, asparagine 204, asparagine 243, asparagine 260, asparagine 296, asparagine 345, asparagine 365, asparagine 433, and asparagine 447 each carry an N-linked (GlcNAc...) asparagine glycan. Positions 322-356 (LPVPKTDVSSPWSAMSQPKTIRQNTSASGARPNPQ) are disordered. A compositionally biased stretch (polar residues) spans 328–349 (DVSSPWSAMSQPKTIRQNTSAS). Position 455 (histidine 455) interacts with Cu cation. Residue serine 563 is the site of GPI-anchor amidated serine attachment. Positions 564-589 (AATSILNGHLKLMLLMVLLASVFRFC) are cleaved as a propeptide — removed in mature form.

Belongs to the multicopper oxidase family. Cu cation is required as a cofactor.

Its subcellular location is the cell membrane. The chain is Monocopper oxidase-like protein SKS1 (SKS1) from Arabidopsis thaliana (Mouse-ear cress).